We begin with the raw amino-acid sequence, 377 residues long: dTDP-fucopyranose mutase (377 aa).

FAD-binding positions include serine 12, 31 to 32 (DD), asparagine 39, 58 to 59 (HI), arginine 348, and 355 to 360 (LDMDVC).

This sequence belongs to the UDP-galactopyranose/dTDP-fucopyranose mutase family. It depends on FAD as a cofactor.

It carries out the reaction dTDP-alpha-D-fucose = dTDP-alpha-D-fucofuranose. Its pathway is bacterial outer membrane biogenesis; LPS O-antigen biosynthesis. Inhibited by Cu(2+), while other divalent cations such as Ca(2+), Co(2+), Fe(2+) and Mg(2+) have no obvious effects on enzyme activity. Functionally, catalyzes the conversion of dTDP-alpha-D-fucopyranose to dTDP-alpha-D-fucofuranose. This is a step in the biosynthesis of D-fucofuranose, a component of E.coli O52 O antigen. The chain is dTDP-fucopyranose mutase (fcf2) from Escherichia coli.